Here is a 206-residue protein sequence, read N- to C-terminus: MRLIRMLLPVLALTTLTAHADDKDVARLTQLLETSKTLTANFSQLTLDGSGTQLQETTGDMTLQRPGLFYWHTNAPAEQTMVSDGKKVTLWDPDLEQATIKKLDERLTQTPALLLSGDVSKISQSFDITAKEAGGVIDFTLKPKTKDTLFDSLRLSFRNGLVNDMQLIDSVGQRTNILFTGVKANEAVPASKFKFDIPKGADVIQE.

An N-terminal signal peptide occupies residues 1-20; it reads MRLIRMLLPVLALTTLTAHA.

The protein belongs to the LolA family. As to quaternary structure, monomer.

It is found in the periplasm. Functionally, participates in the translocation of lipoproteins from the inner membrane to the outer membrane. Only forms a complex with a lipoprotein if the residue after the N-terminal Cys is not an aspartate (The Asp acts as a targeting signal to indicate that the lipoprotein should stay in the inner membrane). The polypeptide is Outer-membrane lipoprotein carrier protein (Pseudomonas fluorescens (strain Pf0-1)).